Reading from the N-terminus, the 505-residue chain is Kinesin light chain 3 (505 aa).

The disordered stretch occupies residues 1 to 20; the sequence is MSVQVAAPGGLGLGLERPSP. Residues 88–150 are a coiled coil; sequence LLALSAHVGA…EEEKSHLEFL (63 aa). The interval 157–193 is disordered; that stretch reads DPPAESQQPESPPRRDSLASLFPSEEEERRGPEAVGA. A Phosphoserine modification is found at S173. 5 TPR repeats span residues 207–240, 249–282, 291–324, 333–366, and 375–408; these read LRTL…LERS, ATML…REQT, AATL…REKV, AKQL…YEAL, and AKTK…EALP. The segment at 409 to 505 is disordered; the sequence is APLGAPNTGT…STSTQDLGPR (97 aa). Over residues 416-434 the composition is skewed to low complexity; it reads TGTTSDTQQQTLSRSSSFS. Residues 435 to 453 show a composition bias toward basic and acidic residues; sequence KLRESIRRGSEKLVSRLRG. S467 carries the post-translational modification Phosphoserine. A compositionally biased stretch (polar residues) spans 489–505; that stretch reads SEASRTLSTSTQDLGPR. T499 carries the post-translational modification Phosphothreonine.

Belongs to the kinesin light chain family. As to quaternary structure, oligomer composed of two heavy chains and two light chains. Associates with microtubulin in an ATP-dependent manner. Interacts with KIF5C. Interacts with ODF1. Interacts with LRGUK. Interacts with VDAC2.

It localises to the cytoplasm. Its subcellular location is the cytoskeleton. The protein resides in the mitochondrion. In terms of biological role, kinesin is a microtubule-associated force-producing protein that may play a role in organelle transport. Plays a role during spermiogenesis in the development of the sperm tail midpiece and in the normal function of spermatozoa. May play a role in the formation of the mitochondrial sheath formation in the developing spermatid midpiece. This Bos taurus (Bovine) protein is Kinesin light chain 3 (KLC3).